The following is an 83-amino-acid chain: ATP synthase subunit 9, mitochondrial (83 aa).

Helical transmembrane passes span Ile8–Leu28 and Ser45–Ser72.

Belongs to the ATPase C chain family. In terms of assembly, F-type ATPases have 2 components, CF(1) - the catalytic core - and CF(0) - the membrane proton channel. CF(1) has five subunits: alpha(3), beta(3), gamma(1), delta(1), epsilon(1). CF(0) has three main subunits: a, b and c.

It localises to the mitochondrion membrane. This protein is one of the chains of the nonenzymatic membrane component (F0) of mitochondrial ATPase. This is ATP synthase subunit 9, mitochondrial (ATP9) from Helianthus annuus (Common sunflower).